The following is a 509-amino-acid chain: ATP synthase subunit alpha (509 aa).

Residue 169–176 (GDRQTGKT) participates in ATP binding.

The protein belongs to the ATPase alpha/beta chains family. As to quaternary structure, F-type ATPases have 2 components, CF(1) - the catalytic core - and CF(0) - the membrane proton channel. CF(1) has five subunits: alpha(3), beta(3), gamma(1), delta(1), epsilon(1). CF(0) has three main subunits: a(1), b(2) and c(9-12). The alpha and beta chains form an alternating ring which encloses part of the gamma chain. CF(1) is attached to CF(0) by a central stalk formed by the gamma and epsilon chains, while a peripheral stalk is formed by the delta and b chains.

The protein resides in the cell inner membrane. The enzyme catalyses ATP + H2O + 4 H(+)(in) = ADP + phosphate + 5 H(+)(out). Its function is as follows. Produces ATP from ADP in the presence of a proton gradient across the membrane. The alpha chain is a regulatory subunit. This is ATP synthase subunit alpha from Rhizobium etli (strain ATCC 51251 / DSM 11541 / JCM 21823 / NBRC 15573 / CFN 42).